We begin with the raw amino-acid sequence, 64 residues long: Temporin-ALg (64 aa).

An N-terminal signal peptide occupies residues 1–22; the sequence is MFTLKKSLLLLFFLGTINLSLC. A propeptide spanning residues 23 to 46 is cleaved from the precursor; that stretch reads EQERNAEEERRDDLGERQAEVEKR. Leu-62 carries the leucine amide modification.

It belongs to the frog skin active peptide (FSAP) family. Temporin subfamily. As to expression, expressed by the skin glands.

The protein localises to the secreted. Its function is as follows. Antimicrobial peptide with activity against Gram-positive and Gram-negative bacteria and against fungi. Has been tested against S.aureus (MIC=2.5 ug/mL), B.pumilus (MIC=2.5 ug/mL), B.cereus (MIC=30.0 ug/mL), E.coli (MIC=5.0 ug/mL), B.dysenteriae (MIC=10.0 ug/mL), A.cacoaceticus (MIC=30.0 ug/mL), P.aeruginosa (MIC=7.5 ug/mL) and C.albicans (MIC=1.25 ug/mL). Also shows a weak hemolytic activity. This chain is Temporin-ALg, found in Amolops loloensis (Lolokou Sucker Frog).